Here is a 169-residue protein sequence, read N- to C-terminus: Peptide deformylase (169 aa).

2 residues coordinate Fe cation: Cys91 and His133. Glu134 is an active-site residue. Residue His137 participates in Fe cation binding.

It belongs to the polypeptide deformylase family. Fe(2+) is required as a cofactor.

It carries out the reaction N-terminal N-formyl-L-methionyl-[peptide] + H2O = N-terminal L-methionyl-[peptide] + formate. Removes the formyl group from the N-terminal Met of newly synthesized proteins. Requires at least a dipeptide for an efficient rate of reaction. N-terminal L-methionine is a prerequisite for activity but the enzyme has broad specificity at other positions. In Serratia proteamaculans (strain 568), this protein is Peptide deformylase.